Consider the following 239-residue polypeptide: MANKKSPAATWPVANGEYVLGNPESCVGVITLGSHGLDQAAVDAGAALSGPCHTENLGIEKVVANYISNPNIRFMIIAGSEVQGHITGQCIKALYENGIGDDGGIIGAKGAIPFMENIGKEPVERLQRQIIDCIDLIDVEDTAKIAAAIKNCTSQDPDAIDEEPMVVDLEGGEAVANTESTSMKPTSPEMALLEARMKIVSEKMNEAAMIAKFNSGYYNGKIQGIAIGLFLSILVFSLL.

Over 1–215 the chain is Cytoplasmic; that stretch reads MANKKSPAAT…EAAMIAKFNS (215 aa). Histidine 85 contributes to the 5-hydroxybenzimidazolylcob(I)amide binding site. A helical transmembrane segment spans residues 216–238; sequence GYYNGKIQGIAIGLFLSILVFSL. Residue leucine 239 is a topological domain, extracellular.

This sequence belongs to the MtrA family. As to quaternary structure, the complex is composed of 8 subunits; MtrA, MtrB, MtrC, MtrD, MtrE, MtrF, MtrG and MtrH. It depends on 5-hydroxybenzimidazolylcob(I)amide as a cofactor.

It is found in the cell membrane. It catalyses the reaction 5-methyl-5,6,7,8-tetrahydromethanopterin + coenzyme M + 2 Na(+)(in) = 5,6,7,8-tetrahydromethanopterin + methyl-coenzyme M + 2 Na(+)(out). Its pathway is one-carbon metabolism; methanogenesis from CO(2); methyl-coenzyme M from 5,10-methylene-5,6,7,8-tetrahydromethanopterin: step 2/2. Part of a complex that catalyzes the formation of methyl-coenzyme M and tetrahydromethanopterin from coenzyme M and methyl-tetrahydromethanopterin. This is an energy-conserving, sodium-ion translocating step. The polypeptide is Tetrahydromethanopterin S-methyltransferase subunit A (Methanococcus maripaludis (strain C7 / ATCC BAA-1331)).